A 98-amino-acid chain; its full sequence is uncharacterized protein (98 aa).

The N-terminal stretch at 1–23 (MKYVALAFVLSLVILQISAQVGA) is a signal peptide.

Nacreous layer of shell (at protein level). Expressed primarily in the mantle with highest level in the mantle pallium and lower level in the mantle edge.

The protein resides in the secreted. This is an uncharacterized protein from Pinctada maxima (Silver-lipped pearl oyster).